A 332-amino-acid polypeptide reads, in one-letter code: Autoinducer 2 import system permease protein LsrD (332 aa).

Helical transmembrane passes span 7 to 27 (YSWE…FGLI), 45 to 65 (ICIG…GMDI), 70 to 90 (TIGL…PLPL), 91 to 111 (AIII…GLII), 118 to 138 (LVIT…LSGM), 162 to 182 (FLGI…FWLL), 216 to 236 (VYAM…SYFG), 240 to 260 (SDLG…GGAN), 261 to 281 (IYGG…VGFL), and 288 to 308 (AGVP…VVVV).

The protein belongs to the binding-protein-dependent transport system permease family. AraH/RbsC subfamily. As to quaternary structure, the complex is composed of two ATP-binding proteins (LsrA), two transmembrane proteins (LsrC and LsrD) and a solute-binding protein (LsrB).

It localises to the cell inner membrane. In terms of biological role, part of the ABC transporter complex LsrABCD involved in autoinducer 2 (AI-2) import. Probably responsible for the translocation of the substrate across the membrane. The protein is Autoinducer 2 import system permease protein LsrD (lsrD) of Salmonella typhi.